We begin with the raw amino-acid sequence, 293 residues long: Homoserine kinase (293 aa).

80–90 lines the ATP pocket; sequence RPASGLGSSAA.

The protein belongs to the GHMP kinase family. Homoserine kinase subfamily.

The protein resides in the cytoplasm. The catalysed reaction is L-homoserine + ATP = O-phospho-L-homoserine + ADP + H(+). It participates in amino-acid biosynthesis; L-threonine biosynthesis; L-threonine from L-aspartate: step 4/5. Functionally, catalyzes the ATP-dependent phosphorylation of L-homoserine to L-homoserine phosphate. This Halorubrum lacusprofundi (strain ATCC 49239 / DSM 5036 / JCM 8891 / ACAM 34) protein is Homoserine kinase.